A 301-amino-acid chain; its full sequence is Glycine--tRNA ligase alpha subunit (301 aa).

The protein belongs to the class-II aminoacyl-tRNA synthetase family. Tetramer of two alpha and two beta subunits.

The protein resides in the cytoplasm. The enzyme catalyses tRNA(Gly) + glycine + ATP = glycyl-tRNA(Gly) + AMP + diphosphate. The protein is Glycine--tRNA ligase alpha subunit of Polaromonas sp. (strain JS666 / ATCC BAA-500).